The following is a 457-amino-acid chain: tRNA modification GTPase MnmE (457 aa).

Residues Arg25, Glu87, and Arg126 each contribute to the (6S)-5-formyl-5,6,7,8-tetrahydrofolate site. The 155-residue stretch at 223 to 377 (GISTAIIGRP…IEERINNLFF (155 aa)) folds into the TrmE-type G domain. K(+) is bound at residue Asn233. GTP-binding positions include 233-238 (NVGKSS), 252-258 (TDIAGTT), and 277-280 (DTAG). Ser237 is a binding site for Mg(2+). K(+) is bound by residues Thr252, Ile254, and Thr257. Thr258 provides a ligand contact to Mg(2+). Lys457 contacts (6S)-5-formyl-5,6,7,8-tetrahydrofolate.

Belongs to the TRAFAC class TrmE-Era-EngA-EngB-Septin-like GTPase superfamily. TrmE GTPase family. As to quaternary structure, homodimer. Heterotetramer of two MnmE and two MnmG subunits. The cofactor is K(+).

The protein resides in the cytoplasm. In terms of biological role, exhibits a very high intrinsic GTPase hydrolysis rate. Involved in the addition of a carboxymethylaminomethyl (cmnm) group at the wobble position (U34) of certain tRNAs, forming tRNA-cmnm(5)s(2)U34. The polypeptide is tRNA modification GTPase MnmE (Streptococcus pneumoniae serotype 2 (strain D39 / NCTC 7466)).